Reading from the N-terminus, the 494-residue chain is ATP synthase subunit beta, chloroplastic (494 aa).

An ATP-binding site is contributed by 172–179; that stretch reads GGAGVGKT.

Belongs to the ATPase alpha/beta chains family. In terms of assembly, F-type ATPases have 2 components, CF(1) - the catalytic core - and CF(0) - the membrane proton channel. CF(1) has five subunits: alpha(3), beta(3), gamma(1), delta(1), epsilon(1). CF(0) has four main subunits: a(1), b(1), b'(1) and c(9-12).

It localises to the plastid. Its subcellular location is the chloroplast thylakoid membrane. The catalysed reaction is ATP + H2O + 4 H(+)(in) = ADP + phosphate + 5 H(+)(out). Functionally, produces ATP from ADP in the presence of a proton gradient across the membrane. The catalytic sites are hosted primarily by the beta subunits. This is ATP synthase subunit beta, chloroplastic from Physcomitrium patens (Spreading-leaved earth moss).